The sequence spans 132 residues: Small ribosomal subunit protein uS8 (132 aa).

This sequence belongs to the universal ribosomal protein uS8 family. Part of the 30S ribosomal subunit. Contacts proteins S5 and S12.

Functionally, one of the primary rRNA binding proteins, it binds directly to 16S rRNA central domain where it helps coordinate assembly of the platform of the 30S subunit. This Bacillus pumilus (strain SAFR-032) protein is Small ribosomal subunit protein uS8.